We begin with the raw amino-acid sequence, 469 residues long: Serine hydroxymethyltransferase, cytosolic (469 aa).

At lysine 248 the chain carries N6-(pyridoxal phosphate)lysine.

This sequence belongs to the SHMT family. Homotetramer. It depends on pyridoxal 5'-phosphate as a cofactor.

It is found in the cytoplasm. The enzyme catalyses (6R)-5,10-methylene-5,6,7,8-tetrahydrofolate + glycine + H2O = (6S)-5,6,7,8-tetrahydrofolate + L-serine. Its pathway is one-carbon metabolism; tetrahydrofolate interconversion. In terms of biological role, interconversion of serine and glycine. The sequence is that of Serine hydroxymethyltransferase, cytosolic (SHM2) from Candida glabrata (strain ATCC 2001 / BCRC 20586 / JCM 3761 / NBRC 0622 / NRRL Y-65 / CBS 138) (Yeast).